We begin with the raw amino-acid sequence, 501 residues long: Protein disulfide isomerase-like 1-1 (501 aa).

The N-terminal stretch at 1 to 23 (MAMRGFTLFSILVLSLCASSIRS) is a signal peptide. The region spanning 24–141 (EETETKEFVL…IVTYLKKQSG (118 aa)) is the Thioredoxin 1 domain. Residue Asn39 is glycosylated (N-linked (GlcNAc...) asparagine). Catalysis depends on nucleophile residues Cys59 and Cys62. Cysteines 59 and 62 form a disulfide. N-linked (GlcNAc...) asparagine glycosylation occurs at Asn275. A Thioredoxin 2 domain is found at 354–482 (FKDGKIAPHK…FISFVDKNKD (129 aa)). Catalysis depends on nucleophile residues Cys404 and Cys407. Residues Cys404 and Cys407 are joined by a disulfide bond. The short motif at 498–501 (KDEL) is the Prevents secretion from ER element.

It belongs to the protein disulfide isomerase family. As to quaternary structure, interacts with RD21A, At3g19390, At5g43060. Highly expressed in flowers, stems and immature seeds, and at lower levels in leaves and siliques (at protein level).

It localises to the endoplasmic reticulum lumen. The protein resides in the vacuole. It carries out the reaction Catalyzes the rearrangement of -S-S- bonds in proteins.. Protein disulfide isomerase that associates with RD21A protease for trafficking from the ER through the Golgi to lytic and protein storage vacuoles of endothelial cells in developing seeds. Regulates the timing of programmed cell death (PCD) of the endothelial cells by chaperoning and inhibiting cysteine proteases during their trafficking to vacuoles. This is Protein disulfide isomerase-like 1-1 (PDIL1-1) from Arabidopsis thaliana (Mouse-ear cress).